Consider the following 235-residue polypeptide: Probable WRKY transcription factor 66 (235 aa).

A DNA-binding region (WRKY) is located at residues 79-147; it reads SPTPAHIDGF…YVGQHACEAP (69 aa).

The protein belongs to the WRKY group III family.

It is found in the nucleus. Its function is as follows. Transcription factor. Interacts specifically with the W box (5'-(T)TGAC[CT]-3'), a frequently occurring elicitor-responsive cis-acting element. The sequence is that of Probable WRKY transcription factor 66 (WRKY66) from Arabidopsis thaliana (Mouse-ear cress).